A 552-amino-acid chain; its full sequence is MIMFCVQCEQTIRTPAENGCSYAQGMCGKTAETSDLQDLLIAALQGLSAWAVKAREYGIINHDVDSFAPRAFFSTLTNVNFDSPRIVGYAREAIALREALKAQCLAVDANARVDNPMADLQLVSDDLGELQRQAAEFTPNKDKAAIGENILGLRLLCLYGLKGAAAYMEHAHVLGQYDNDIYAQYHKIMAWLGTWPADMNALLECSMEIGQMNFKVMSILDAGETGKYGHPTPTQVNVKATAGKCILISGHDLKDLYNLLEQTEGTGVNVYTHGEMLPAHGYPELRKFKHLVGNYGSGWQNQQVEFARFPGPIVMTSNCIIDPTVGAYDDRIWTRSIVGWPGVRHLDGEDFSAVIAQAQQMAGFPYSEIPHLITVGFGRQTLLGAADTLIDLVSREKLRHIFLLGGCDGARGERHYFTDFATSVPDDCLILTLACGKYRFNKLEFGDIEGLPRLVDAGQCNDAYSAIILAVTLAEKLGCGVNDLPLSLVLSWFEQKAIVILLTLLSLGVKNIVTGPTAPGFLTPDLLAVLNEKFGLRSITTVEEDMKQLLNA.

The [2Fe-2S] cluster site is built by Cys-5, Cys-8, Cys-20, and Cys-27. His-251, Glu-275, Cys-319, Cys-407, Cys-435, Cys-460, Glu-494, and Lys-496 together coordinate hybrid [4Fe-2O-2S] cluster. Cys-407 is modified (cysteine persulfide).

The protein belongs to the HCP family. The cofactor is [2Fe-2S] cluster. Hybrid [4Fe-2O-2S] cluster is required as a cofactor.

It localises to the cytoplasm. It carries out the reaction A + NH4(+) + H2O = hydroxylamine + AH2 + H(+). Its function is as follows. Catalyzes the reduction of hydroxylamine to form NH(3) and H(2)O. This is Hydroxylamine reductase from Shigella flexneri.